A 53-amino-acid polypeptide reads, in one-letter code: uncharacterized protein (53 aa).

This is an uncharacterized protein from Homo sapiens (Human).